The primary structure comprises 222 residues: Eukaryotic translation initiation factor 3 subunit K (222 aa).

The region spanning 46-208 is the PCI domain; it reads YDLEANLAVL…KIKTKNITEK (163 aa).

It belongs to the eIF-3 subunit K family. Component of the eukaryotic translation initiation factor 3 (eIF-3) complex. The eIF-3 complex interacts with pix.

The protein resides in the cytoplasm. In terms of biological role, component of the eukaryotic translation initiation factor 3 (eIF-3) complex, which is involved in protein synthesis of a specialized repertoire of mRNAs and, together with other initiation factors, stimulates binding of mRNA and methionyl-tRNAi to the 40S ribosome. The eIF-3 complex specifically targets and initiates translation of a subset of mRNAs involved in cell proliferation. In Drosophila ananassae (Fruit fly), this protein is Eukaryotic translation initiation factor 3 subunit K.